The chain runs to 159 residues: MSQLTHFDNAGQAHMVDVGNKANTHRVAVATGTITMLPATFALVRDGSAKKGDVLGIARVAAIMATKRTADLIPLCHPIGLTKVAVDFALDEPSSTIACIVRTETHGQTGVEMEALTGVQVALLTIYDMCKAVDRGMVMGNVKLLEKHGGKSGDWVAGA.

Residues 75-77 (LCH) and 113-114 (ME) each bind substrate. Residue Asp128 is part of the active site.

Belongs to the MoaC family. Homohexamer; trimer of dimers.

It catalyses the reaction (8S)-3',8-cyclo-7,8-dihydroguanosine 5'-triphosphate = cyclic pyranopterin phosphate + diphosphate. It participates in cofactor biosynthesis; molybdopterin biosynthesis. Its function is as follows. Catalyzes the conversion of (8S)-3',8-cyclo-7,8-dihydroguanosine 5'-triphosphate to cyclic pyranopterin monophosphate (cPMP). This is Cyclic pyranopterin monophosphate synthase from Cupriavidus metallidurans (strain ATCC 43123 / DSM 2839 / NBRC 102507 / CH34) (Ralstonia metallidurans).